We begin with the raw amino-acid sequence, 1133 residues long: Early transcription factor large subunit homolog (1133 aa).

The Helicase ATP-binding domain occupies 52–352 (KGGRAFFPCD…PNGQPLQRQQ (301 aa)). 99-106 (WQTGTGKS) lines the ATP pocket. Positions 281–284 (DEIH) match the DEAH box motif. The 201-residue stretch at 524–724 (MMKDILSIIR…EGDKALRKHA (201 aa)) folds into the Helicase C-terminal domain.

Belongs to the DEAD box helicase family. DEAH subfamily.

The protein resides in the virion. It catalyses the reaction ATP + H2O = ADP + phosphate + H(+). In terms of biological role, putative initation factor. This is Early transcription factor large subunit homolog from Ornithodoros (relapsing fever ticks).